Reading from the N-terminus, the 1086-residue chain is MANLLKTVVTGCSCPFLSNLGSCKVLPGKKNFLRAFHTHRILWCKAPVKPGIPYKQLTVGVPKEIFQNEKRVALSPAGVQALVKQGFNVVVESGAGEASKFSDDHYRAAGAQIQGAKEVLASDLVVKVRAPMLNPTLGIHEADLLKTSGTLISFIYPAQNPDLLNKLSKRNTTVLAMDQVPRVTIAQGYDALSSMANIAGYKAVVLAANHFGRFFTGQITAAGKVPPAKILIVGGGVAGLASAGAAKSMGAIVRGFDTRAAALEQFKSLGAEPLEVDLKESGEGQGGYAKEMSKEFIEAEMKLFAQQCKEVDILISTALIPGKKAPILFNKEMIESMKEGSVVVDLAAEAGGNFETTKPGELYVHKGITHIGYTDLPSRMATQASTLYSNNITKLLKAISPDKDNFYFEVKDDFDFGTMGHVIRGTVVMKDGQVIFPAPTPKNIPQGAPVKQKTVAELEAEKAATITPFRKTMTSASVYTAGLTGILGLGIAAPNLAFSQMVTTFGLAGIVGYHTVWGVTPALHSPLMSVTNAISGLTAVGGLVLMGGHLYPSTTSQGLAALATFISSVNIAGGFLVTQRMLDMFKRPTDPPEYNYLYLLPAGTFVGGYLASLYSGYNIEQIMYLGSGLCCVGALAGLSTQGTARLGNALGMIGVAGGLAATLGGLKPCPELLAQMSGAMALGGTIGLTIAKRIQISDLPQLVAAFHSLVGLAAVLTCIAEYIIEYPHFATDAAANLTKIVAYLGTYIGGVTFSGSLVAYGKLQGILKSAPLLLPGRHLLNAGLLAASVGGIIPFMMDPSFTTGITCLGSVSALSAVMGVTLTAAIGGADMPVVITVLNSYSGWALCAEGFLLNNNLLTIVGALIGSSGAILSYIMCVAMNRSLANVILGGYGTTSTAGGKPMEISGTHTEINLDNAIDMIREANSIIITPGYGLCAAKAQYPIADLVKMLSEQGKKVRFGIHPVAGRMPGQLNVLLAEAGVPYDIVLEMDEINHDFPDTDLVLVIGANDTVNSAAQEDPNSIIAGMPVLEVWKSKQVIVMKRSLGVGYAAVDNPIFYKPNTAMLLGDAKKTCDALQAKVRESYQK.

The transit peptide at 1–43 (MANLLKTVVTGCSCPFLSNLGSCKVLPGKKNFLRAFHTHRILW) directs the protein to the mitochondrion. The Mitochondrial matrix segment spans residues 44–474 (CKAPVKPGIP…TITPFRKTMT (431 aa)). K70 bears the N6-acetyllysine mark. K117 carries the N6-succinyllysine modification. 182–184 (RVT) lines the NAD(+) pocket. K224 carries the post-translational modification N6-succinyllysine. Residues V237, 257 to 259 (DTR), and G287 contribute to the NAD(+) site. K294 carries the N6-succinyllysine modification. E300 and L319 together coordinate NAD(+). K331 carries the post-translational modification N6-succinyllysine. K397 is subject to N6-acetyllysine. 4 helical membrane-spanning segments follow: residues 475–493 (SASV…GIAA), 501–521 (MVTT…GVTP), 527–546 (LMSV…LVLM), and 558–578 (GLAA…FLVT). Over 579–595 (QRMLDMFKRPTDPPEYN) the chain is Mitochondrial matrix. The next 5 helical transmembrane spans lie at 596 to 616 (YLYL…LYSG), 622 to 642 (IMYL…STQG), 646 to 666 (LGNA…LGGL), 672 to 691 (LLAQ…LTIA), and 702 to 722 (LVAA…IAEY). Residues 723 to 739 (IIEYPHFATDAAANLTK) lie on the Cytoplasmic side of the membrane. The next 5 helical transmembrane spans lie at 740 to 760 (IVAY…LVAY), 778 to 797 (HLLN…PFMM), 801 to 819 (FTTG…AVMG), 833 to 853 (VVIT…GFLL), and 857 to 879 (LLTI…MCVA). Topologically, residues 880–1086 (MNRSLANVIL…QAKVRESYQK (207 aa)) are mitochondrial matrix. NADP(+) contacts are provided by residues Y933, 965 to 970 (VAGRMP), 1007 to 1011 (GANDT), 1026 to 1027 (GM), 1042 to 1049 (KRSLGVGY), and 1068 to 1069 (DA). K1079 is modified (N6-succinyllysine).

This sequence in the N-terminal section; belongs to the AlaDH/PNT family. It in the C-terminal section; belongs to the PNT beta subunit family. In terms of assembly, homodimer.

It is found in the mitochondrion inner membrane. It carries out the reaction NAD(+) + NADPH + H(+)(in) = NADH + NADP(+) + H(+)(out). In terms of biological role, the transhydrogenation between NADH and NADP is coupled to respiration and ATP hydrolysis and functions as a proton pump across the membrane. May play a role in reactive oxygen species (ROS) detoxification in the adrenal gland. In Ovis aries (Sheep), this protein is NAD(P) transhydrogenase, mitochondrial (NNT).